The chain runs to 710 residues: Elongation factor G (710 aa).

A tr-type G domain is found at 8–290 (SQYRNIGISA…AIVEYLPSPM (283 aa)). Residues 17-24 (AHIDAGKT), 88-92 (DTPGH), and 142-145 (NKMD) contribute to the GTP site.

Belongs to the TRAFAC class translation factor GTPase superfamily. Classic translation factor GTPase family. EF-G/EF-2 subfamily.

The protein resides in the cytoplasm. Functionally, catalyzes the GTP-dependent ribosomal translocation step during translation elongation. During this step, the ribosome changes from the pre-translocational (PRE) to the post-translocational (POST) state as the newly formed A-site-bound peptidyl-tRNA and P-site-bound deacylated tRNA move to the P and E sites, respectively. Catalyzes the coordinated movement of the two tRNA molecules, the mRNA and conformational changes in the ribosome. The polypeptide is Elongation factor G (Buchnera aphidicola subsp. Baizongia pistaciae (strain Bp)).